We begin with the raw amino-acid sequence, 643 residues long: 1-deoxy-D-xylulose-5-phosphate synthase (643 aa).

Residues H78 and 119 to 121 (AHS) each bind thiamine diphosphate. Residue D150 coordinates Mg(2+). Thiamine diphosphate contacts are provided by residues 151–152 (GS), N179, Y288, and E370. Mg(2+) is bound at residue N179.

Belongs to the transketolase family. DXPS subfamily. In terms of assembly, homodimer. The cofactor is Mg(2+). Requires thiamine diphosphate as cofactor.

It carries out the reaction D-glyceraldehyde 3-phosphate + pyruvate + H(+) = 1-deoxy-D-xylulose 5-phosphate + CO2. It participates in metabolic intermediate biosynthesis; 1-deoxy-D-xylulose 5-phosphate biosynthesis; 1-deoxy-D-xylulose 5-phosphate from D-glyceraldehyde 3-phosphate and pyruvate: step 1/1. Its function is as follows. Catalyzes the acyloin condensation reaction between C atoms 2 and 3 of pyruvate and glyceraldehyde 3-phosphate to yield 1-deoxy-D-xylulose-5-phosphate (DXP). This Brucella ovis (strain ATCC 25840 / 63/290 / NCTC 10512) protein is 1-deoxy-D-xylulose-5-phosphate synthase.